The primary structure comprises 289 residues: 4-hydroxy-3-methylbut-2-enyl diphosphate reductase (289 aa).

Cys-13 lines the [4Fe-4S] cluster pocket. The (2E)-4-hydroxy-3-methylbut-2-enyl diphosphate site is built by His-42 and His-76. Positions 42 and 76 each coordinate dimethylallyl diphosphate. Residues His-42 and His-76 each coordinate isopentenyl diphosphate. Residue Cys-98 coordinates [4Fe-4S] cluster. His-130 provides a ligand contact to (2E)-4-hydroxy-3-methylbut-2-enyl diphosphate. Residue His-130 participates in dimethylallyl diphosphate binding. His-130 serves as a coordination point for isopentenyl diphosphate. Glu-132 acts as the Proton donor in catalysis. Thr-168 is a (2E)-4-hydroxy-3-methylbut-2-enyl diphosphate binding site. [4Fe-4S] cluster is bound at residue Cys-199. Residues Ser-227, Ser-228, Asn-229, and Ser-272 each coordinate (2E)-4-hydroxy-3-methylbut-2-enyl diphosphate. Dimethylallyl diphosphate-binding residues include Ser-227, Ser-228, Asn-229, and Ser-272. Positions 227, 228, 229, and 272 each coordinate isopentenyl diphosphate.

This sequence belongs to the IspH family. The cofactor is [4Fe-4S] cluster.

The catalysed reaction is isopentenyl diphosphate + 2 oxidized [2Fe-2S]-[ferredoxin] + H2O = (2E)-4-hydroxy-3-methylbut-2-enyl diphosphate + 2 reduced [2Fe-2S]-[ferredoxin] + 2 H(+). It catalyses the reaction dimethylallyl diphosphate + 2 oxidized [2Fe-2S]-[ferredoxin] + H2O = (2E)-4-hydroxy-3-methylbut-2-enyl diphosphate + 2 reduced [2Fe-2S]-[ferredoxin] + 2 H(+). The protein operates within isoprenoid biosynthesis; dimethylallyl diphosphate biosynthesis; dimethylallyl diphosphate from (2E)-4-hydroxy-3-methylbutenyl diphosphate: step 1/1. It participates in isoprenoid biosynthesis; isopentenyl diphosphate biosynthesis via DXP pathway; isopentenyl diphosphate from 1-deoxy-D-xylulose 5-phosphate: step 6/6. In terms of biological role, catalyzes the conversion of 1-hydroxy-2-methyl-2-(E)-butenyl 4-diphosphate (HMBPP) into a mixture of isopentenyl diphosphate (IPP) and dimethylallyl diphosphate (DMAPP). Acts in the terminal step of the DOXP/MEP pathway for isoprenoid precursor biosynthesis. The polypeptide is 4-hydroxy-3-methylbut-2-enyl diphosphate reductase (Porphyromonas gingivalis (strain ATCC BAA-308 / W83)).